The sequence spans 414 residues: Transcriptional repressor protein YY1 (414 aa).

The segment at 1-170 (MASGDTLYIA…SGGGASSGGG (170 aa)) is interaction with the SMAD1/SMAD4 complex. The span at 32 to 41 (PVETIETTVV) shows a compositional bias: low complexity. A disordered region spans residues 32–83 (PVETIETTVVGEEEEEDDDDEDGGGGDHGGGGGGHGHAGHHHHHHHHHHHHP). Residues 42–55 (GEEEEEDDDDEDGG) show a composition bias toward acidic residues. Residues 57 to 67 (GDHGGGGGGHG) show a composition bias toward gly residues. Residues 68–83 (HAGHHHHHHHHHHHHP) show a composition bias toward basic residues. Residues 118 to 260 (DDSDGLRAED…YSEYMTGKKL (143 aa)) form a gly-rich region involved in interaction with HCFC1 region. S120 carries the post-translational modification Phosphoserine. The segment at 159–203 (GKSGGGASSGGGRVKKGGGKKSGKKSYLGGGAGAAGGGGADPGNK) is disordered. A compositionally biased stretch (gly residues) spans 160 to 170 (KSGGGASSGGG). Over residues 171–182 (RVKKGGGKKSGK) the composition is skewed to basic residues. Residues K182 and K183 each participate in a glycyl lysine isopeptide (Lys-Gly) (interchain with G-Cter in SUMO2) cross-link. Residues 186–199 (LGGGAGAAGGGGAD) are compositionally biased toward gly residues. Residues K208 and K230 each participate in a glycyl lysine isopeptide (Lys-Gly) (interchain with G-Cter in SUMO2) cross-link. S247 is modified (phosphoserine). The tract at residues 257-341 (GKKLPPGGIP…KAFVESSKLK (85 aa)) is involved in nuclear matrix association. Residues K286 and K288 each participate in a glycyl lysine isopeptide (Lys-Gly) (interchain with G-Cter in SUMO2) cross-link. Residues 295–414 (TIACPHKGCT…LTHAKAKNNQ (120 aa)) form a binding to DNA region. 3 C2H2-type zinc fingers span residues 296-320 (IACP…LHTH), 325-347 (HVCA…QLVH), and 353-377 (FQCT…VRIH). Residues C298, C303, H316, H320, C327, C330, H343, H347, C355, C360, H373, and H377 each coordinate Zn(2+). The interval 333–371 (AFVESSKLKRHQLVHTGEKPFQCTFEGCGKRFSLDFNLR) is involved in repression of activated transcription. The involved in masking transactivation domain stretch occupies residues 371-397 (RTHVRIHTGDRPYVCPFDGCNKKFAQS). A Phosphothreonine modification is found at T378. Residues 383–407 (YVCPFDGCNKKFAQSTNLKSHILTH) form a C2H2-type 4 zinc finger. Zn(2+)-binding residues include C385, C390, H403, and H407. Residues K409 and K411 each participate in a glycyl lysine isopeptide (Lys-Gly) (interchain with G-Cter in SUMO2) cross-link.

Belongs to the YY transcription factor family. As to quaternary structure, interacts with YAF2 through the region encompassing the first and second zinc fingers. Component of the chromatin remodeling INO80 complex; specifically part of a complex module associated with the DBINO domain of INO80. Interacts with EED and EZH2; the interactions are indicative for an association with the PRC2/EED-EZH2 complex. Found in a complex with SMAD1 and SMAD4. Interacts with SFMBT2. Found in a complex with YY1, SIN3A and HDAC1. Accessory component of the polycomb repressive deubiquitinase (PR-DUB) complex, at least composed of BAP1, one of ASXL1, ASXL2 or (probably) ASXL3 and one of MBD5 or MBD6; the PR-DUB core associates with a number of accessory proteins, including FOXK1, FOXK2, KDM1B, HCFC1, YY1 and OGT. Interacts (via Gly-rich region) with HCFC1; the interaction is direct. Interacts (via C-terminal zinc-finger domains) with BAP1 (via ULD domain); the interaction is direct and requires HCFC1. Post-translationally, transiently poly-ADP-ribosylated by PARP1 upon DNA damage, with the effect of decreasing affinity of YY1 to its cognate DNA binding sites. In terms of processing, ubiquitinated. Phosphorylation at Ser-120 by CK2 prevents proteolytic cleavage by caspase-7 (CASP7) during apoptosis. Post-translationally, proteolytically cleaved by caspase-7 (CASP7) in response to apoptosis. Phosphorylation at Ser-120 protects against proteolytic cleavage. As to expression, expressed in ovary and, at lower levels, in testis.

The protein resides in the nucleus. The protein localises to the nucleus matrix. It is found in the cytoplasm. In terms of biological role, multifunctional transcription factor that exhibits positive and negative control on a large number of cellular and viral genes by binding to sites overlapping the transcription start site. Binds to the consensus sequence 5'-CCGCCATNTT-3'; some genes have been shown to contain a longer binding motif allowing enhanced binding; the initial CG dinucleotide can be methylated greatly reducing the binding affinity. The effect on transcription regulation is depending upon the context in which it binds and diverse mechanisms of action include direct activation or repression, indirect activation or repression via cofactor recruitment, or activation or repression by disruption of binding sites or conformational DNA changes. Its activity is regulated by transcription factors and cytoplasmic proteins that have been shown to abrogate or completely inhibit YY1-mediated activation or repression. Binds to the upstream conserved region (UCR) (5'-CGCCATTTT-3') of Moloney murine leukemia virus (MuLV). Acts synergistically with the SMAD1 and SMAD4 in bone morphogenetic protein (BMP)-mediated cardiac-specific gene expression. Binds to SMAD binding elements (SBEs) (5'-GTCT/AGAC-3') within BMP response element (BMPRE) of cardiac activating regions. Proposed to recruit the PRC2/EED-EZH2 complex to target genes that are transcriptional repressed. Involved in DNA repair. In vitro, binds to DNA recombination intermediate structures (Holliday junctions). Involved in spermatogenesis and may play a role in meiotic DNA double-strand break repair. Plays a role in regulating enhancer activation. Recruits the PR-DUB complex to specific gene-regulatory regions. Its function is as follows. Proposed core component of the chromatin remodeling INO80 complex which is involved in transcriptional regulation, DNA replication and probably DNA repair; proposed to target the INO80 complex to YY1-responsive elements. This Mus musculus (Mouse) protein is Transcriptional repressor protein YY1 (Yy1).